Consider the following 500-residue polypeptide: Intermediate filament protein ifc-1 (500 aa).

Residues 1-36 (MSLYGGIPTNLVSGMSSAGAICTTQIRDAREREKRE) are head. The IF rod domain occupies 33–383 (EKREIGLLND…VLLNGANVTT (351 aa)). The coil 1A stretch occupies residues 37 to 68 (IGLLNDRLADYIEKVRFLKAQNHVLSHDIEIL). Residues 69-81 (RRGFSGGGHISSF) are linker 1. A coil 1B region spans residues 82 to 219 (FESEISNCTV…TENSSRIEQE (138 aa)). The linker 12 stretch occupies residues 220–237 (LIYIHRDTTLENRDYFRQ). Residues 238 to 383 (ELQAAMRDIR…VLLNGANVTT (146 aa)) are coil 2. The segment at 384–496 (YVSNSTGAAG…RHHESSYSYS (113 aa)) is tail.

Belongs to the intermediate filament family.

The protein localises to the cytoplasm. Functionally, cytoplasmic intermediate filaments provide mechanical strength to cells. Not essential protein. This is Intermediate filament protein ifc-1 (ifc-1) from Caenorhabditis elegans.